The sequence spans 144 residues: Peptide methionine sulfoxide reductase MsrB (144 aa).

Residues 5 to 127 (KEEKIKSLNR…NSAALRFIPK (123 aa)) enclose the MsrB domain. Residue Cys-116 is the Nucleophile of the active site.

Belongs to the MsrB Met sulfoxide reductase family.

The catalysed reaction is L-methionyl-[protein] + [thioredoxin]-disulfide + H2O = L-methionyl-(R)-S-oxide-[protein] + [thioredoxin]-dithiol. This chain is Peptide methionine sulfoxide reductase MsrB, found in Bacillus velezensis (strain DSM 23117 / BGSC 10A6 / LMG 26770 / FZB42) (Bacillus amyloliquefaciens subsp. plantarum).